Reading from the N-terminus, the 526-residue chain is Cytochrome P450 monooxygenase 58 (526 aa).

The next 3 membrane-spanning stretches (helical) occupy residues 13–33, 115–135, and 306–326; these read IASS…LLLI, FIMA…GYGK, and IGAG…AMTL. Cys-451 lines the heme pocket.

The protein belongs to the cytochrome P450 family. Heme is required as a cofactor.

It localises to the membrane. The protein operates within secondary metabolite biosynthesis. Its function is as follows. Cytochrome P450 monooxygenase that is able to use delta(6)-protoilludene as a substrate to produce delta(6)-protoilludene-8-ol. In Postia placenta (strain ATCC 44394 / Madison 698-R) (Brown rot fungus), this protein is Cytochrome P450 monooxygenase 58.